The following is a 122-amino-acid chain: Iron-sulfur cluster assembly protein SufA (122 aa).

The [2Fe-2S] cluster site is built by Cys-50, Cys-114, and Cys-116. [4Fe-4S] cluster contacts are provided by Cys-50, Cys-114, and Cys-116.

Belongs to the HesB/IscA family. As to quaternary structure, homodimer. Interacts with SufB and SufC.

Functionally, member of gene cluster sufABCDSE that mediates iron-sulfur cluster assembly under oxidative stress and iron limitation conditions. Binds [2Fe-2S] and [4Fe-4S] clusters by mobilizing sulfur atoms provided by the SufS-SufE cysteine desulfurase system and then transfers the assembled Fe-S clusters to target proteins including ferredoxin and aconitase. Seems to act as a Fe-S cluster carrier rather than a scaffold, this role being performed by SufB and SufC. The sequence is that of Iron-sulfur cluster assembly protein SufA (sufA) from Escherichia coli (strain K12).